Here is a 336-residue protein sequence, read N- to C-terminus: Glycerol-3-phosphate dehydrogenase [NAD(P)+] (336 aa).

Ser16, Tyr17, His37, and Lys111 together coordinate NADPH. The sn-glycerol 3-phosphate site is built by Lys111, Gly140, and Thr142. NADPH is bound at residue Ala144. Lys196, Asp249, Ser259, Arg260, and Asn261 together coordinate sn-glycerol 3-phosphate. Lys196 serves as the catalytic Proton acceptor. Arg260 lines the NADPH pocket. NADPH is bound by residues Val284 and Glu286.

This sequence belongs to the NAD-dependent glycerol-3-phosphate dehydrogenase family.

It localises to the cytoplasm. The enzyme catalyses sn-glycerol 3-phosphate + NAD(+) = dihydroxyacetone phosphate + NADH + H(+). It catalyses the reaction sn-glycerol 3-phosphate + NADP(+) = dihydroxyacetone phosphate + NADPH + H(+). The protein operates within membrane lipid metabolism; glycerophospholipid metabolism. Its function is as follows. Catalyzes the reduction of the glycolytic intermediate dihydroxyacetone phosphate (DHAP) to sn-glycerol 3-phosphate (G3P), the key precursor for phospholipid synthesis. The protein is Glycerol-3-phosphate dehydrogenase [NAD(P)+] of Actinobacillus pleuropneumoniae serotype 3 (strain JL03).